The chain runs to 433 residues: ATP-dependent protease ATPase subunit HslU (433 aa).

ATP is bound by residues Val18, 60–65, Asp246, Glu311, and Arg383; that span reads GVGKTE.

Belongs to the ClpX chaperone family. HslU subfamily. In terms of assembly, a double ring-shaped homohexamer of HslV is capped on each side by a ring-shaped HslU homohexamer. The assembly of the HslU/HslV complex is dependent on binding of ATP.

The protein localises to the cytoplasm. Its function is as follows. ATPase subunit of a proteasome-like degradation complex; this subunit has chaperone activity. The binding of ATP and its subsequent hydrolysis by HslU are essential for unfolding of protein substrates subsequently hydrolyzed by HslV. HslU recognizes the N-terminal part of its protein substrates and unfolds these before they are guided to HslV for hydrolysis. The sequence is that of ATP-dependent protease ATPase subunit HslU from Nitrobacter hamburgensis (strain DSM 10229 / NCIMB 13809 / X14).